The primary structure comprises 167 residues: Single-stranded DNA-binding protein 2 (167 aa).

Residues 1–104 (MLNRVVLVGR…VVCDSVQFLE (104 aa)) enclose the SSB domain. Positions 107–167 (NAQQNGGQRQ…IDISDDDLPF (61 aa)) are disordered. 2 stretches are compositionally biased toward low complexity: residues 109–118 (QQNGGQRQQN) and 132–147 (SGQN…TKQS). An Important for interaction with partner proteins motif is present at residues 162 to 167 (DDDLPF).

In terms of assembly, homotetramer.

Functionally, plays an important role in DNA replication, recombination and repair. Binds to ssDNA and to an array of partner proteins to recruit them to their sites of action during DNA metabolism. The polypeptide is Single-stranded DNA-binding protein 2 (ssb2) (Staphylococcus aureus (strain MSSA476)).